We begin with the raw amino-acid sequence, 363 residues long: S-adenosylmethionine:tRNA ribosyltransferase-isomerase (363 aa).

It belongs to the QueA family. As to quaternary structure, monomer.

It localises to the cytoplasm. The enzyme catalyses 7-aminomethyl-7-carbaguanosine(34) in tRNA + S-adenosyl-L-methionine = epoxyqueuosine(34) in tRNA + adenine + L-methionine + 2 H(+). It functions in the pathway tRNA modification; tRNA-queuosine biosynthesis. Its function is as follows. Transfers and isomerizes the ribose moiety from AdoMet to the 7-aminomethyl group of 7-deazaguanine (preQ1-tRNA) to give epoxyqueuosine (oQ-tRNA). In Haemophilus influenzae (strain 86-028NP), this protein is S-adenosylmethionine:tRNA ribosyltransferase-isomerase.